Reading from the N-terminus, the 120-residue chain is Large ribosomal subunit protein uL18 (120 aa).

The span at 1–20 shows a compositional bias: basic residues; that stretch reads MKSTRKSATQRRHRRLRRHL. Residues 1–26 are disordered; the sequence is MKSTRKSATQRRHRRLRRHLSGTSER.

It belongs to the universal ribosomal protein uL18 family. As to quaternary structure, part of the 50S ribosomal subunit; part of the 5S rRNA/L5/L18/L25 subcomplex. Contacts the 5S and 23S rRNAs.

In terms of biological role, this is one of the proteins that bind and probably mediate the attachment of the 5S RNA into the large ribosomal subunit, where it forms part of the central protuberance. The chain is Large ribosomal subunit protein uL18 from Synechocystis sp. (strain ATCC 27184 / PCC 6803 / Kazusa).